The primary structure comprises 441 residues: Xylose isomerase (441 aa).

Active-site residues include His-99 and Asp-102. Mn(2+) contacts are provided by Glu-230, Glu-266, Asp-294, Asp-305, Asp-307, and Asp-337.

The protein belongs to the xylose isomerase family. Homotetramer. Mn(2+) is required as a cofactor.

The protein resides in the cytoplasm. It catalyses the reaction alpha-D-xylose = alpha-D-xylulofuranose. This chain is Xylose isomerase (xylA), found in Geobacillus stearothermophilus (Bacillus stearothermophilus).